The sequence spans 255 residues: Ribonuclease HII (255 aa).

An RNase H type-2 domain is found at 72–255; the sequence is AIICGIDEVG…KSFEPIKSLL (184 aa). Positions 78, 79, and 170 each coordinate a divalent metal cation.

Belongs to the RNase HII family. Mn(2+) serves as cofactor. Requires Mg(2+) as cofactor.

It is found in the cytoplasm. The catalysed reaction is Endonucleolytic cleavage to 5'-phosphomonoester.. In terms of biological role, endonuclease that specifically degrades the RNA of RNA-DNA hybrids. This is Ribonuclease HII from Staphylococcus aureus (strain MSSA476).